A 657-amino-acid polypeptide reads, in one-letter code: Tyrosine-protein phosphatase vhp-1 (657 aa).

The 131-residue stretch at 21 to 151 (APDTTLVVDC…FAQQYPQLCE (131 aa)) folds into the Rhodanese domain. In terms of domain architecture, Tyrosine-protein phosphatase spans 175–318 (GITLITPNIY…LLEYENVLIK (144 aa)). Cys-262 acts as the Phosphocysteine intermediate in catalysis. Disordered regions lie at residues 353-426 (SNCV…MDLG), 539-563 (VPAG…SSSA), and 581-657 (PAST…PCHQ). Over residues 366–405 (SPSSPSVSEGSAASEPETSSSAASSSSTASAPPSMPSTSE) the composition is skewed to low complexity. Over residues 406–419 (QGTSSGTVNVNGKR) the composition is skewed to polar residues. Composition is skewed to low complexity over residues 542–563 (GSSS…SSSA) and 581–597 (PAST…TSRA).

Belongs to the protein-tyrosine phosphatase family. Non-receptor class dual specificity subfamily. May interact with pmk-3. Expressed in the pharynx, intestine, neurons and vulval hypodermal cells.

It carries out the reaction O-phospho-L-tyrosyl-[protein] + H2O = L-tyrosyl-[protein] + phosphate. Acts preferentially on the c-Jun N-terminal kinase (JNK) and p38 MAPKs. Plays an important role in the heavy metal stress response and in axon regeneration by negatively regulating the kgb-1 (JNK-like) and the pmk-1 (p38-type) MAPK signaling pathways. In Caenorhabditis elegans, this protein is Tyrosine-protein phosphatase vhp-1 (vhp-1).